Consider the following 334-residue polypeptide: uncharacterized protein (334 aa).

The active-site Proton donor is the Tyr-52. The tract at residues 314–334 (LPPPASPNSEPQVTGGCSSMC) is disordered. Over residues 320–334 (PNSEPQVTGGCSSMC) the composition is skewed to polar residues.

Belongs to the aldo/keto reductase family.

It is found in the cytoplasm. The protein resides in the nucleus. This is an uncharacterized protein from Schizosaccharomyces pombe (strain 972 / ATCC 24843) (Fission yeast).